A 440-amino-acid polypeptide reads, in one-letter code: SET domain-containing protein 4 (440 aa).

Residues 1 to 16 (MQKGKGRTSRIRRRKL) are compositionally biased toward basic residues. The segment at 1–24 (MQKGKGRTSRIRRRKLCGSSESRG) is disordered. One can recognise an SET domain in the interval 48–273 (SNLAPACFPG…KHEEVFICYG (226 aa)). An S-adenosyl-L-methionine-binding site is contributed by Tyr272.

It belongs to the class V-like SAM-binding methyltransferase superfamily. SETD4 family. As to quaternary structure, forms a ternary complex with TBK1 and ZNF268; the interaction with TBK1 is ZNF268-dependent and leads to TBK1 monomethylation.

It localises to the cytoplasm. The protein resides in the cytosol. The protein localises to the nucleus. The enzyme catalyses L-lysyl(4)-[histone H3] + S-adenosyl-L-methionine = N(6)-methyl-L-lysyl(4)-[histone H3] + S-adenosyl-L-homocysteine + H(+). The catalysed reaction is N(6)-methyl-L-lysyl(4)-[histone H3] + S-adenosyl-L-methionine = N(6),N(6)-dimethyl-L-lysyl(4)-[histone H3] + S-adenosyl-L-homocysteine + H(+). It carries out the reaction L-lysyl(20)-[histone H4] + S-adenosyl-L-methionine = N(6)-methyl-L-lysyl(20)-[histone H4] + S-adenosyl-L-homocysteine + H(+). It catalyses the reaction N(6)-methyl-L-lysyl(20)-[histone H4] + S-adenosyl-L-methionine = N(6),N(6)-dimethyl-L-lysyl(20)-[histone H4] + S-adenosyl-L-homocysteine + H(+). The enzyme catalyses N(6),N(6)-dimethyl-L-lysyl(20)-[histone H4] + S-adenosyl-L-methionine = N(6),N(6),N(6)-trimethyl-L-lysyl(20)-[histone H4] + S-adenosyl-L-homocysteine + H(+). The catalysed reaction is L-lysyl-[protein] + S-adenosyl-L-methionine = N(6)-methyl-L-lysyl-[protein] + S-adenosyl-L-homocysteine + H(+). In terms of biological role, protein-lysine N-methyltransferase that methylates both histones and non-histone proteins. Via its catalytic activity, regulates many processes, including cell proliferation, cell differentiation, inflammatory response and apoptosis. Regulates the inflammatory response by mediating mono- and dimethylation of 'Lys-4' of histone H3 (H3K4me1 and H3K4me2, respectively), leading to activate the transcription of pro-inflammatory cytokines IL6 and TNF-alpha. Through the catalysis of TBK1 monomethylation, may regulate virus-induced interferon signaling. TBK1 monomethylation enhances its interaction with MAVS, STING and IRF3, hence promoting antiviral interferon signaling. Also involved in the regulation of stem cell quiescence by catalyzing the trimethylation of 'Lys-20' of histone H4 (H4K20me3), thereby promoting heterochromatin formation. In the brain, epigenetically controls quiescence of neural stem cells for sustaining a protected neural stem cell population and maintaining a stem cell reservoir for neurogenesis. Involved in proliferation, migration, paracrine and myogenic differentiation of bone marrow mesenchymal stem cells (BMSCs). Through the catalysis of XRCC5/Ku70 trimethylation, regulates BAX-mediated apoptosis. SETD4-catalyzed XRCC5 methylation results in XRCC5 translocation to the cytoplasm, where it interacts with BAX, sequestering it from the mitochondria, hence preventing BAX-mediated apoptosis. In Homo sapiens (Human), this protein is SET domain-containing protein 4.